A 240-amino-acid chain; its full sequence is Methylthioribulose-1-phosphate dehydratase (240 aa).

C99 is a binding site for substrate. Residues H116 and H118 each coordinate Zn(2+). E145 acts as the Proton donor/acceptor in catalysis. Residue H201 participates in Zn(2+) binding.

The protein belongs to the aldolase class II family. MtnB subfamily. Requires Zn(2+) as cofactor.

The protein localises to the cytoplasm. It catalyses the reaction 5-(methylsulfanyl)-D-ribulose 1-phosphate = 5-methylsulfanyl-2,3-dioxopentyl phosphate + H2O. Its pathway is amino-acid biosynthesis; L-methionine biosynthesis via salvage pathway; L-methionine from S-methyl-5-thio-alpha-D-ribose 1-phosphate: step 2/6. Catalyzes the dehydration of methylthioribulose-1-phosphate (MTRu-1-P) into 2,3-diketo-5-methylthiopentyl-1-phosphate (DK-MTP-1-P). This chain is Methylthioribulose-1-phosphate dehydratase, found in Ajellomyces capsulatus (strain G186AR / H82 / ATCC MYA-2454 / RMSCC 2432) (Darling's disease fungus).